A 58-amino-acid chain; its full sequence is MAVPKRKKSKAKTAMRRAQWKLKMPGLSICPECGQPKAPHRVCSNCGYYKNKEVIEVV.

Belongs to the bacterial ribosomal protein bL32 family.

This is Large ribosomal subunit protein bL32 from Sulfurihydrogenibium sp. (strain YO3AOP1).